Consider the following 142-residue polypeptide: Transcription antitermination protein NusB (142 aa).

The protein belongs to the NusB family. In terms of assembly, monomer or homodimer; in equilibrium, with a preference for the monomer. Dimerization may be employed to package NusB in an inactive form until recruitment into antitermination complexes.

In terms of biological role, involved in transcription antitermination. Required for transcription of ribosomal RNA (rRNA) genes. Binds specifically to the boxA antiterminator sequence of the ribosomal RNA (rrn) operons. The chain is Transcription antitermination protein NusB from Thermotoga maritima (strain ATCC 43589 / DSM 3109 / JCM 10099 / NBRC 100826 / MSB8).